Reading from the N-terminus, the 195-residue chain is Ureidoglycolate lyase (195 aa).

Belongs to the ureidoglycolate lyase family. In terms of assembly, homodimer.

It carries out the reaction (S)-ureidoglycolate = urea + glyoxylate. The protein operates within nitrogen metabolism; (S)-allantoin degradation. Its function is as follows. Catalyzes the catabolism of the allantoin degradation intermediate (S)-ureidoglycolate, generating urea and glyoxylate. Involved in the utilization of allantoin as secondary nitrogen source when primary sources are limiting. The polypeptide is Ureidoglycolate lyase (DAL3) (Saccharomyces cerevisiae (strain ATCC 204508 / S288c) (Baker's yeast)).